A 260-amino-acid chain; its full sequence is Cell division protein DivIB (260 aa).

Topologically, residues Met1–Lys25 are cytoplasmic. A helical transmembrane segment spans residues Met26 to Ser46. The Extracellular portion of the chain corresponds to Tyr47–Tyr260. A POTRA domain is found at Ser48–Tyr119.

It belongs to the FtsQ/DivIB family. DivIB subfamily.

Its subcellular location is the cell membrane. Cell division protein that may be involved in stabilizing or promoting the assembly of the division complex. The sequence is that of Cell division protein DivIB from Lentilactobacillus buchneri (strain NRRL B-30929) (Lactobacillus buchneri).